Consider the following 74-residue polypeptide: Sec-independent protein translocase protein TatA (74 aa).

The chain crosses the membrane as a helical span at residues 1–21 (MGGISIWNLVIIVLLVVLLFG). The tract at residues 51–74 (AEFEKVEQKTAESTEQKAKEKEQA) is disordered.

This sequence belongs to the TatA/E family. As to quaternary structure, the Tat system comprises two distinct complexes: a TatABC complex, containing multiple copies of TatA, TatB and TatC subunits, and a separate TatA complex, containing only TatA subunits. Substrates initially bind to the TatABC complex, which probably triggers association of the separate TatA complex to form the active translocon.

It is found in the cell inner membrane. In terms of biological role, part of the twin-arginine translocation (Tat) system that transports large folded proteins containing a characteristic twin-arginine motif in their signal peptide across membranes. TatA could form the protein-conducting channel of the Tat system. The sequence is that of Sec-independent protein translocase protein TatA from Glaesserella parasuis serovar 5 (strain SH0165) (Haemophilus parasuis).